The following is a 591-amino-acid chain: Metalloendopeptidase OPG085 (591 aa).

His-41 serves as a coordination point for Zn(2+). Residue Glu-44 is part of the active site. The Zn(2+) site is built by His-45 and Glu-112.

Belongs to the peptidase M44 family. It depends on Zn(2+) as a cofactor. Undergoes proteolytic processing during the course of infection. May be cleaved into 46 kDa and 22 kDa products (Potential).

The protein localises to the virion. Its function is as follows. Probably involved in maturation of some viral proteins by processing them preferentially at Ala-Gly-|-Ser/Thr/Lys motifs. Does not seem to be responsible for the cleavage of major core proteins. In Monkeypox virus, this protein is Metalloendopeptidase OPG085 (OPG085).